A 195-amino-acid polypeptide reads, in one-letter code: dTTP/UTP pyrophosphatase (195 aa).

The active-site Proton acceptor is D70.

Belongs to the Maf family. YhdE subfamily. The cofactor is a divalent metal cation.

The protein resides in the cytoplasm. The catalysed reaction is dTTP + H2O = dTMP + diphosphate + H(+). It carries out the reaction UTP + H2O = UMP + diphosphate + H(+). Functionally, nucleoside triphosphate pyrophosphatase that hydrolyzes dTTP and UTP. May have a dual role in cell division arrest and in preventing the incorporation of modified nucleotides into cellular nucleic acids. This Methanococcoides burtonii (strain DSM 6242 / NBRC 107633 / OCM 468 / ACE-M) protein is dTTP/UTP pyrophosphatase.